Here is a 238-residue protein sequence, read N- to C-terminus: ATP synthase subunit a (238 aa).

The next 5 helical transmembrane spans lie at 15-35 (IFNL…FVFI), 76-96 (YSLF…LGLM), 111-131 (PTAN…LTHI), 167-187 (LALR…LLLL), and 208-230 (AFSV…VYLG).

It belongs to the ATPase A chain family. As to quaternary structure, F-type ATPases have 2 components, CF(1) - the catalytic core - and CF(0) - the membrane proton channel. CF(1) has five subunits: alpha(3), beta(3), gamma(1), delta(1), epsilon(1). CF(0) has three main subunits: a(1), b(2) and c(9-12). The alpha and beta chains form an alternating ring which encloses part of the gamma chain. CF(1) is attached to CF(0) by a central stalk formed by the gamma and epsilon chains, while a peripheral stalk is formed by the delta and b chains.

It localises to the cell membrane. Functionally, key component of the proton channel; it plays a direct role in the translocation of protons across the membrane. The sequence is that of ATP synthase subunit a from Streptococcus pneumoniae serotype 19F (strain G54).